Reading from the N-terminus, the 335-residue chain is NADH-ubiquinone oxidoreductase chain 2 (335 aa).

The next 11 membrane-spanning stretches (helical) occupy residues 7-27 (PTMA…VSSA), 28-48 (NWMF…PIMM), 58-78 (GAVK…MSST), 81-101 (WMTF…AIML), 110-130 (FWYP…LSSW), 147-167 (NMNF…VIGM), 174-194 (TIMA…AAVY), 200-220 (IMYF…MGYL), 240-260 (MALL…GFMP), 274-294 (IILL…LNII), and 315-335 (SLKF…FIML).

Belongs to the complex I subunit 2 family.

The protein localises to the mitochondrion inner membrane. It catalyses the reaction a ubiquinone + NADH + 5 H(+)(in) = a ubiquinol + NAD(+) + 4 H(+)(out). Its function is as follows. Core subunit of the mitochondrial membrane respiratory chain NADH dehydrogenase (Complex I) that is believed to belong to the minimal assembly required for catalysis. Complex I functions in the transfer of electrons from NADH to the respiratory chain. The immediate electron acceptor for the enzyme is believed to be ubiquinone. The polypeptide is NADH-ubiquinone oxidoreductase chain 2 (ND2) (Lumbricus terrestris (Common earthworm)).